The chain runs to 321 residues: Capsid protein (321 aa).

The interval 1 to 43 is disordered; that stretch reads MSGEQTEQISKDKAVAAEQARKEQIAEGKKAAESPEVERRKKN. The segment covering 9 to 39 has biased composition (basic and acidic residues); the sequence is ISKDKAVAAEQARKEQIAEGKKAAESPEVER.

The protein belongs to the potexviruses coat protein family.

Its subcellular location is the virion. Functionally, required for genome encapsidation. Forms ribonucleoprotein complexes along with TGB1 helicase and viral RNA. The protein is Capsid protein of Poplar mosaic virus (isolate ATCC Pv275) (PMV).